The primary structure comprises 241 residues: Small ribosomal subunit protein uS2 (241 aa).

This sequence belongs to the universal ribosomal protein uS2 family.

The chain is Small ribosomal subunit protein uS2 from Sodalis glossinidius (strain morsitans).